The chain runs to 295 residues: Protease HtpX homolog (295 aa).

A run of 2 helical transmembrane segments spans residues 6-26 (IGLFLLTNILVVVTISIVTSV) and 40-60 (LSSLVIFCFLWGMGGAFVSLL). His-148 lines the Zn(2+) pocket. The active site involves Glu-149. His-152 contacts Zn(2+). The next 2 membrane-spanning stretches (helical) occupy residues 163–183 (LIQGIVNAFVMFFSRIISYAL) and 198–218 (ISNIVLSILFSILGSIVVAYF). Glu-223 contributes to the Zn(2+) binding site.

This sequence belongs to the peptidase M48B family. Zn(2+) is required as a cofactor.

The protein localises to the cell inner membrane. This chain is Protease HtpX homolog, found in Leptospira borgpetersenii serovar Hardjo-bovis (strain JB197).